A 236-amino-acid polypeptide reads, in one-letter code: Phosphoribosylaminoimidazole-succinocarboxamide synthase (236 aa).

This sequence belongs to the SAICAR synthetase family.

It carries out the reaction 5-amino-1-(5-phospho-D-ribosyl)imidazole-4-carboxylate + L-aspartate + ATP = (2S)-2-[5-amino-1-(5-phospho-beta-D-ribosyl)imidazole-4-carboxamido]succinate + ADP + phosphate + 2 H(+). The protein operates within purine metabolism; IMP biosynthesis via de novo pathway; 5-amino-1-(5-phospho-D-ribosyl)imidazole-4-carboxamide from 5-amino-1-(5-phospho-D-ribosyl)imidazole-4-carboxylate: step 1/2. The sequence is that of Phosphoribosylaminoimidazole-succinocarboxamide synthase (purC) from Rickettsia prowazekii (strain Madrid E).